Consider the following 221-residue polypeptide: N-(5'-phosphoribosyl)anthranilate isomerase (221 aa).

Belongs to the TrpF family.

The enzyme catalyses N-(5-phospho-beta-D-ribosyl)anthranilate = 1-(2-carboxyphenylamino)-1-deoxy-D-ribulose 5-phosphate. The protein operates within amino-acid biosynthesis; L-tryptophan biosynthesis; L-tryptophan from chorismate: step 3/5. This chain is N-(5'-phosphoribosyl)anthranilate isomerase, found in Chlorobaculum tepidum (strain ATCC 49652 / DSM 12025 / NBRC 103806 / TLS) (Chlorobium tepidum).